We begin with the raw amino-acid sequence, 379 residues long: Transcription termination factor 1a, mitochondrial (379 aa).

The N-terminal 37 residues, 1–37 (MASRNIWCVRRNFLFDLRDWMLQYSAEVFLKSISFRP), are a transit peptide targeting the mitochondrion. 5 interaction with DNA regions span residues 151-152 (RS), 229-233 (QSTKR), 306-313 (SEKKFNDK), 337-340 (SINT), and 366-373 (SQRRYEAK).

It belongs to the mTERF family. Monomer. Post-translationally, phosphoprotein with mostly four phosphate groups. While the DNA-binding activity is unaffected by the phosphorylation state, only the phosphorylated form of the protein is active for termination activity. Functioning seems to be regulated by phosphorylation. Predominantly expressed in heart and liver, with extremely low levels in other tissues. Expressed strongly in the heart and at lower levels in brain, liver and kidney.

It localises to the mitochondrion. Its function is as follows. Transcription termination factor. Binds to a 28 bp region within the tRNA(Leu(uur)) gene at a position immediately adjacent to and downstream of the 16S rRNA gene; this region comprises a tridecamer sequence critical for directing accurate termination. Binds DNA along the major grove and promotes DNA bending and partial unwinding. Promotes base flipping. Transcription termination activity appears to be polarized with highest specificity for transcripts initiated on the light strand. This Mus musculus (Mouse) protein is Transcription termination factor 1a, mitochondrial (Mterf1a).